Consider the following 298-residue polypeptide: MYNRVDGEYAHTEQAEESSWPADGSECAQTLTEIARLESLAPGELFDRMGLCFSKPHTSDAIDDSSNTSGLSTSSLSSSSELSVATSPVRPLFDYRTAELPQANVSGICVGLAAEWLLDLPSSASSRMGVLLPGTENHRSAARRQEQSEKLKTQLKEDKAEGSHNFQAKSTILRDAGLEPSAEETRYRFGTSSCIDKIVNELAQDPSVHLVSLKFVQPGAGTHTIATATSNGTTILSDPNYGEFTVPSDRVGGLFKSLAERYSTLNKRDISAVVTQRIRYGHPNATDLALFPRAEPHR.

Basic and acidic residues predominate over residues 1 to 14; that stretch reads MYNRVDGEYAHTEQ. 2 disordered regions span residues 1 to 25 and 59 to 80; these read MYNR…ADGS and SDAI…SSSS. Over residues 65 to 80 the composition is skewed to low complexity; sequence SSNTSGLSTSSLSSSS. Residue Cys109 is part of the active site. A compositionally biased stretch (basic and acidic residues) spans 137–162; the sequence is NHRSAARRQEQSEKLKTQLKEDKAEG. A disordered region spans residues 137-166; sequence NHRSAARRQEQSEKLKTQLKEDKAEGSHNF. Catalysis depends on residues His223 and Asp238.

It belongs to the peptidase C58 family.

Potential cysteine protease, which may play a central role after invasion of host cell. In Bradyrhizobium diazoefficiens (strain JCM 10833 / BCRC 13528 / IAM 13628 / NBRC 14792 / USDA 110), this protein is Putative cysteine protease YopT-like blr2058.